The primary structure comprises 196 residues: Endonuclease V (196 aa).

Mg(2+) is bound by residues Asp37 and Asp98.

The protein belongs to the endonuclease V family. Requires Mg(2+) as cofactor.

The protein resides in the cytoplasm. It carries out the reaction Endonucleolytic cleavage at apurinic or apyrimidinic sites to products with a 5'-phosphate.. DNA repair enzyme involved in the repair of deaminated bases. Selectively cleaves double-stranded DNA at the second phosphodiester bond 3' to a deoxyinosine leaving behind the intact lesion on the nicked DNA. This is Endonuclease V from Sulfurisphaera tokodaii (strain DSM 16993 / JCM 10545 / NBRC 100140 / 7) (Sulfolobus tokodaii).